A 228-amino-acid polypeptide reads, in one-letter code: Protein 33K (228 aa).

A disordered region spans residues 1-156 (MAPKKKLQLP…GALRLAPNEP (156 aa)). Positions 15 to 53 (TDEEEYWDSQAEEVLDEEEEMMEDWDSLDEASEAEEVSD) are enriched in acidic residues. Composition is skewed to low complexity over residues 54–63 (ETPSPSVAFP) and 104–119 (AAPTAPAAAAAAATAA). The segment at 171–198 (YAIFQQSRGQEQELKIKNRSLRSLTRSC) is necessary for nuclear subcellular location. The segment at 177–197 (SRGQEQELKIKNRSLRSLTRS) is RS-repeat; required for splicing enhancer activity.

It belongs to the adenoviridae splicing factor family. As to quaternary structure, homooligomer. Interacts with DBP; this interaction occurs at a unique vertex during genome packaging. Interacts with IVa2; this interaction occurs at a unique vertex during genome packaging and seems to potentiate IVa2 and 33K oligomerization. In terms of processing, phosphorylated in vitro by human PKA and PRKDC. PRKDC inhibits, whereas PKA activates the splicing factor.

Its subcellular location is the host nucleus. In terms of biological role, promotes alternative splicing of late transcripts by promoting splicing at weak 3' splice sites. Required for the temporal activation of major late pre-mRNA splicing at late times of infection. Induces the splicing and expression of the late capsid vertex protein. Probably functions as the small terminase that is part of the molecular motor that translocates genomic DNA in empty capsid during DNA packaging. This motor is located at a unique vertex and comprises at least the IVa2 ATPase, the small terminase 33K and probably a portal. Forms a ring-like structure of about 17 nm in which genomic DNA is translocated into the capsid. Stimulates IVa2 ATPase activity in the presence of the viral genome. Once the DNA is packaged, the terminase detaches: the 33K protein is present in the empty particles, but not in the mature virions. Also involved in virion assembly. This Homo sapiens (Human) protein is Protein 33K.